A 249-amino-acid polypeptide reads, in one-letter code: Short-chain dehydrogenase virB (249 aa).

Residues Ile16, Arg104, Tyr150, Lys154, Val183, and Thr185 each coordinate NADP(+). The active-site Proton donor is the Tyr150. Lys154 serves as the catalytic Lowers pKa of active site Tyr.

This sequence belongs to the short-chain dehydrogenases/reductases (SDR) family.

The protein operates within secondary metabolite biosynthesis. Functionally, short-chain dehydrogenase; part of the gene cluster that mediates the biosynthesis of virensols and trichoxide, fungal natural products that contain or are derived from a salicylaldehyde core. The pathway begins with the synthesis of the reduced chain in virensol C by the highly reducing polyketide synthase virA via condensation of one acetate and 8 malonate units. VirA has interesting programming rules since the first 2 ketides are fully reduced, the 3 following ketides undergo beta-dehydration, and the last 3 ketides are only reduced to beta-hydroxys to yield the trihydroxy portion. The production of aldehyde virensol C by virA alone is surprising, since virA does not contain a reductase (R) domain that is typically associated with reductive product release in HRPKS. The cupin-domain enzyme virC is involved in enhancing virA product turnover. The short-chain dehydrogenase virB then oxidizes the C-7 alcohol of virensol C to a ketone, yielding virensol D. Virensol D is further transformed to salicylaldehyde 5-deoxyaurocitrin by the short-chain dehydrogenase virD. VirD catalyzes the dehydrogenation of C-3 to form the beta-ketone aldehyde, which is followed by the generation of the nucleophilic C-2 that is required for the intramolecular aldol condensation between C-2 and C-7, itself followed by dehydration and aromatization which leads to salicylaldehyde 5-deoxyaurocitrin. While the dehydrogenation of virensol D is definitely catalyzed by virD, the aldol condensation and dehydration may be uncatalyzed or assisted by virD. The short chain dehydrogenase virG then converts salicylaldehyde 5-deoxyaurocitrin into virensol B which is further hydroxylated by the cytochrome P450 monooxygenase virE to yield the hydroquinone virensol A. VirI then may oxidize virensol A to form the quinone, while virH performs the epoxidation. Finally, the two remaining short-chain dehydrogenases, virK and virL, are probably responsible for reducing the ketones to the corresponding alcohols to furnish the epoxycyclohexanol structure in trichoxide. The chain is Short-chain dehydrogenase virB from Hypocrea virens (strain Gv29-8 / FGSC 10586) (Gliocladium virens).